The sequence spans 507 residues: MPDTDQAASWLASARSSLTDISVGPRTDRTGRVEDIGDGIALISGLPDAKLDELLSFGNGRYGFVHGLEEDSIGCILLNNEGTIEAGDAVQGTSGVVSVPVGPGLLGRVVDPLGRPLDGKGPVEAETWFPVERPAPAIIDRELVTEPVQTGTLAIDTLFPIGRGQRELIVGDRATGKTTIAVDAILAQKSNDMICVYVAIGQKTSSVQRVIETIRTRGNPDRCIIVVARPAEAPGLCWIAPFAAMSMAEYFRDRGQHALLVIDDLSKHAATHREVSLLTGRPPGREAYPGDIFYVHARLLERAAKLSAAKGGGSLTALPVAETEAGNLSAYIPTNLISITDGQIVLNRTLFDQGQKPAVDVGVSVSRVGGAAQSPILRSSVGTLRLDYAQFIELEAFTRFGGLPDTHVRQQLARGACIRATLRQGPHAPLDLLQEVALVTASQNGLLDGVTAKNIRTIQSGLGDYLRSNASEISTAIESGGVLSAEQKERFVACLRQYVEPRASAAS.

171–178 (GDRATGKT) contributes to the ATP binding site.

This sequence belongs to the ATPase alpha/beta chains family. F-type ATPases have 2 components, CF(1) - the catalytic core - and CF(0) - the membrane proton channel. CF(1) has five subunits: alpha(3), beta(3), gamma(1), delta(1), epsilon(1). CF(0) has three main subunits: a(1), b(2) and c(9-12). The alpha and beta chains form an alternating ring which encloses part of the gamma chain. CF(1) is attached to CF(0) by a central stalk formed by the gamma and epsilon chains, while a peripheral stalk is formed by the delta and b chains.

The protein resides in the cell inner membrane. The enzyme catalyses ATP + H2O + 4 H(+)(in) = ADP + phosphate + 5 H(+)(out). In terms of biological role, produces ATP from ADP in the presence of a proton gradient across the membrane. The alpha chain is a regulatory subunit. The chain is ATP synthase subunit alpha 2 from Gluconobacter oxydans (strain 621H) (Gluconobacter suboxydans).